We begin with the raw amino-acid sequence, 267 residues long: L-aspartate dehydrogenase (267 aa).

NAD(+) contacts are provided by Ala124 and Asn190. Residue His218 is part of the active site.

This sequence belongs to the L-aspartate dehydrogenase family.

It carries out the reaction L-aspartate + NADP(+) + H2O = oxaloacetate + NH4(+) + NADPH + H(+). It catalyses the reaction L-aspartate + NAD(+) + H2O = oxaloacetate + NH4(+) + NADH + H(+). Its pathway is cofactor biosynthesis; NAD(+) biosynthesis; iminoaspartate from L-aspartate (dehydrogenase route): step 1/1. Specifically catalyzes the NAD or NADP-dependent dehydrogenation of L-aspartate to iminoaspartate. This is L-aspartate dehydrogenase from Methanocaldococcus jannaschii (strain ATCC 43067 / DSM 2661 / JAL-1 / JCM 10045 / NBRC 100440) (Methanococcus jannaschii).